Consider the following 349-residue polypeptide: Twinfilin-2 (349 aa).

ADF-H domains lie at 4 to 139 (QTGI…KHVS) and 177 to 313 (GLAF…DEVH). Residues 324 to 349 (AKPKGPVGKRGQKRLIKGPGENGEDS) form a disordered region.

The protein belongs to the actin-binding proteins ADF family. Twinfilin subfamily. Interacts with G-actin; ADP-actin form and capping protein (CP).

The protein resides in the cytoplasm. It is found in the cytoskeleton. Its subcellular location is the perinuclear region. Actin-binding protein involved in motile and morphological processes. Inhibits actin polymerization, likely by sequestering G-actin. This is Twinfilin-2 (TWF2) from Gallus gallus (Chicken).